An 89-amino-acid chain; its full sequence is Small ribosomal subunit protein uS15 (89 aa).

The protein belongs to the universal ribosomal protein uS15 family. As to quaternary structure, part of the 30S ribosomal subunit. Forms a bridge to the 50S subunit in the 70S ribosome, contacting the 23S rRNA.

Its function is as follows. One of the primary rRNA binding proteins, it binds directly to 16S rRNA where it helps nucleate assembly of the platform of the 30S subunit by binding and bridging several RNA helices of the 16S rRNA. In terms of biological role, forms an intersubunit bridge (bridge B4) with the 23S rRNA of the 50S subunit in the ribosome. The sequence is that of Small ribosomal subunit protein uS15 from Kocuria rhizophila (strain ATCC 9341 / DSM 348 / NBRC 103217 / DC2201).